Reading from the N-terminus, the 525-residue chain is Peptide chain release factor 3 (525 aa).

The 268-residue stretch at 9–276 (AKRRTFAIIS…GFTRYAPAPQ (268 aa)) folds into the tr-type G domain. Residues 18 to 25 (SHPDAGKT), 86 to 90 (DTPGH), and 140 to 143 (NKFD) contribute to the GTP site.

The protein belongs to the TRAFAC class translation factor GTPase superfamily. Classic translation factor GTPase family. PrfC subfamily.

Its subcellular location is the cytoplasm. Increases the formation of ribosomal termination complexes and stimulates activities of RF-1 and RF-2. It binds guanine nucleotides and has strong preference for UGA stop codons. It may interact directly with the ribosome. The stimulation of RF-1 and RF-2 is significantly reduced by GTP and GDP, but not by GMP. This Francisella tularensis subsp. tularensis (strain WY96-3418) protein is Peptide chain release factor 3.